A 618-amino-acid chain; its full sequence is Cationic amino acid transporter 3 (618 aa).

Residues 1–36 (MLWQALRRFGQKLVRRRVLELGMGETRLARCLSTLD) are Cytoplasmic-facing. The helical transmembrane segment at 37–57 (LVALGVGSTLGAGVYVLAGEV) threads the bilayer. Residues 58–61 (AKDK) are Extracellular-facing. The chain crosses the membrane as a helical span at residues 62-82 (AGPSIVICFLVAALSSVLAGL). Residues 83–107 (CYAEFGARVPGSGSAYLYSYVTVGE) lie on the Cytoplasmic side of the membrane. A helical transmembrane segment spans residues 108–128 (LWAFTTGWNLILSYVIGTASV). Over 129 to 162 (ARAWSSAFDNLIGNHISRTLKGTILLKMPHVLAE) the chain is Extracellular. A helical transmembrane segment spans residues 163-183 (YPDFFALALVLLLTGLLVLGA). The Cytoplasmic portion of the chain corresponds to 184–191 (SKSALVTK). A helical transmembrane segment spans residues 192 to 212 (VFTGMNLLVLSFVIISGFIKG). Topologically, residues 213-244 (ELRNWKLTKEDYCLTMSESNGTCSLDSMGSGG) are extracellular. N-linked (GlcNAc...) asparagine glycosylation is present at asparagine 232. A helical transmembrane segment spans residues 245–265 (FMPFGLEGILRGAATCFYAFV). Topologically, residues 266-285 (GFDCIATTGEEAQNPQRSIP) are cytoplasmic. The helical transmembrane segment at 286-306 (MGIVISMFICFLAYFGVSSAL) threads the bilayer. Residues 307 to 335 (TLMMPYYKLHPESPLPEAFSYVGWEPARY) are Extracellular-facing. A helical transmembrane segment spans residues 336–356 (LVAIGSLCALSTSLLGSMFPM). The Cytoplasmic portion of the chain corresponds to 357–380 (PRVMYSMAEDGLLFRVLAKVHSVT). The chain crosses the membrane as a helical span at residues 381-401 (HIPIVATLVSGVIAAFMAFLF). At 402–406 (ELTDL) the chain is on the extracellular side. Residues 407-427 (VDLMSIGTLLAHSLVSICVLI) traverse the membrane as a helical segment. Residues 428–474 (LRYQPDQEMKSVEEEMELQEETLEAEKLTVQALFCPVNSIPTLLSGR) lie on the Cytoplasmic side of the membrane. The chain crosses the membrane as a helical span at residues 475–495 (VVYVCSSLLAVLLTVLCLVLT). Residues 496 to 506 (WWTTPLRSGDP) are Extracellular-facing. Residues 507–527 (VWVTVVVLILGLILAISGVIW) form a helical membrane-spanning segment. The Cytoplasmic segment spans residues 528 to 539 (RQPQNRTPLHFK). Residues 540 to 560 (VPAVPLLPLVSIFVNVYLMMQ) traverse the membrane as a helical segment. Residues 561-568 (MTAGTWAR) are Extracellular-facing. The helical transmembrane segment at 569–589 (FGIWMLIGFAIYFGYGIQHSM) threads the bilayer. At 590-618 (KEVKNHQTLPKTRAQTIDLDLTTSCVHSI) the chain is on the cytoplasmic side. Phosphothreonine is present on threonine 605. Serine 617 carries the phosphoserine modification.

This sequence belongs to the amino acid-polyamine-organocation (APC) superfamily. Cationic amino acid transporter (CAT) (TC 2.A.3.3) family. In terms of processing, N-glycosylated. Expressed in adult brain and in a wide variety of embryonic tissues.

The protein localises to the cell membrane. It carries out the reaction L-arginine(in) = L-arginine(out). The catalysed reaction is L-lysine(in) = L-lysine(out). It catalyses the reaction L-ornithine(in) = L-ornithine(out). Uniporter that mediates the uptake of cationic L-amino acids such as L-arginine, L-lysine and L-ornithine. The transport is sodium ions- and pH-independent, moderately trans-stimulated and is mediated by passive diffusion. The protein is Cationic amino acid transporter 3 of Mus musculus (Mouse).